Reading from the N-terminus, the 502-residue chain is Glutamate decarboxylase (502 aa).

K278 carries the N6-(pyridoxal phosphate)lysine modification. The segment at 471-502 (GLHHFHMDTVETQKDIIKHWRKIAGKKTSGVC) is calmodulin-binding.

This sequence belongs to the group II decarboxylase family. It depends on pyridoxal 5'-phosphate as a cofactor.

The enzyme catalyses L-glutamate + H(+) = 4-aminobutanoate + CO2. Its function is as follows. Catalyzes the production of GABA. The calmodulin-binding is calcium-dependent and it is proposed that this may, directly or indirectly, form a calcium regulated control of GABA biosynthesis. This Solanum lycopersicum (Tomato) protein is Glutamate decarboxylase.